The chain runs to 988 residues: MESQTGRKSARRLSMTKKKSQSVCPIKERTSNGGAASITSFFRNTPPSKLACPLCGKLVPRYKINEHIDSQCQNFLVEDDGKQKEITKAPSNSALASNNEREKSPGDKDADTSPFFKKNCAVRRDSSETDSQAKPVKTVGLGSLSSKLSRRALRLSDESGVNLTRVSDNEKDHNADLNRSQKENCMNSLTFGSERNGTDADNILETEPEASNQPQLKNVEKSASDSSISSDVHTSSSSVLKRKSMEIPKNDTNTTETCIAHKKSRFFQSSIERGDESKVKSDQTEASSSAYDVPTSKSPIKSKTTQEEIEKELNKTPANEHNMLDVEKVGEGSEQQPTRLPYYLRNFRTVLEAVLENEDDRRLFNEDDFSTIQSFQQLSVPGQMLYVRLFQRKLKWLQVCKVEYTEISTDLRPVVQELVACGFLQTESELHDLHEVLDLLPAPELRNLAKTFHLGRGGSQKQQLVEGLLQLGKQRSLFAGQNNTAAVILKRAKQAAGSCVRLCRSSRVVFSRVLLLFTLTDTLEEEDLASGGQGQLYTILLVNSGRLAFPEYTVHRSARLFKDRDDLIRYETAMRALQEVIAAMQSGSWEDAYDLYTTAMAAWQEIKDSCDLSHQEQLPVFLRCFTVGWTYTRILSRGVEILQRLKRYEDAVEQLRNLLSQSVYCVDSRGRWWDRLALNLQQHLKQHEQAIGAIRDGLNDPLARTGHKLSLYQRASRMKESASLKKYRLLLRDLPTVHVQDVTHVTIRGQLFPHEGGMGKSVFLRAASEDEGSGGGQGTVLMCSVEDLALEHYRTLGFDQGIHGEGSTFSTLFGLLMWDIIFMDGVPDVFLNPYQTCPLDLHTDCFYGSRREAIEARAEMLREASVETLQDLIADVWSTQEGRVCALINWERFSTPQQAQSLVACLGGHFLSGVFLRMAKDYRHCRGGLPDLVVWSTSSNKYKLVEVKGPNDRLSQKQQIWLDELRKLGADVEVCHVTATGARGARRE.

The interval 1-39 is disordered; sequence MESQTGRKSARRLSMTKKKSQSVCPIKERTSNGGAASIT. Over residues 8 to 20 the composition is skewed to basic residues; the sequence is KSARRLSMTKKKS. The UBZ4-type zinc finger occupies 49 to 77; it reads KLACPLCGKLVPRYKINEHIDSQCQNFLV. Zn(2+) is bound by residues C52, C55, H67, and C72. 3 disordered regions span residues 87–115, 164–256, and 269–307; these read TKAP…TSPF, TRVS…NTTE, and SSIE…TTQE. Over residues 89–98 the composition is skewed to polar residues; that stretch reads APSNSALASN. Composition is skewed to basic and acidic residues over residues 99–111 and 167–182; these read NERE…KDAD and SDNE…RSQK. Residues 183 to 195 are compositionally biased toward polar residues; that stretch reads ENCMNSLTFGSER. Over residues 224-238 the composition is skewed to low complexity; the sequence is SDSSISSDVHTSSSS. The segment covering 272–283 has biased composition (basic and acidic residues); sequence ERGDESKVKSDQ. The segment covering 284-303 has biased composition (polar residues); sequence TEASSSAYDVPTSKSPIKSK. Residues 636 to 663 adopt a coiled-coil conformation; the sequence is SRGVEILQRLKRYEDAVEQLRNLLSQSV. Residues E805, D931, E946, and V947 each coordinate Mn(2+). In terms of domain architecture, VRR-NUC spans 866–978; it reads VETLQDLIAD…GADVEVCHVT (113 aa).

The protein belongs to the FAN1 family. As to quaternary structure, interacts with fancd2 (when monoubiquitinated). It depends on Mn(2+) as a cofactor. The cofactor is Mg(2+).

The protein resides in the nucleus. The catalysed reaction is Hydrolytically removes 5'-nucleotides successively from the 3'-hydroxy termini of 3'-hydroxy-terminated oligonucleotides.. Functionally, nuclease required for the repair of DNA interstrand cross-links (ICL) recruited at sites of DNA damage by monoubiquitinated FANCD2. Specifically involved in repair of ICL-induced DNA breaks by being required for efficient homologous recombination, probably in the resolution of homologous recombination intermediates. Acts as a 5'-3' exonuclease that anchors at a cut end of DNA and cleaves DNA successively at every third nucleotide, allowing to excise an ICL from one strand through flanking incisions. Probably keeps excising with 3'-flap annealing until it reaches and unhooks the ICL. Acts at sites that have a 5'-terminal phosphate anchor at a nick or a 1- or 2-nucleotide flap and is augmented by a 3' flap. Also has endonuclease activity toward 5'-flaps. The polypeptide is Fanconi-associated nuclease 1 (fan1) (Danio rerio (Zebrafish)).